Reading from the N-terminus, the 141-residue chain is Nucleoside triphosphatase NudI (141 aa).

The 141-residue stretch at 1–141 (MRQRTIVCPL…RKTLRLKGLL (141 aa)) folds into the Nudix hydrolase domain. The short motif at 38–59 (GGVEPGERIEEALRREIREELG) is the Nudix box element.

Belongs to the Nudix hydrolase family. NudI subfamily. As to quaternary structure, monomer. Mg(2+) is required as a cofactor.

The enzyme catalyses a ribonucleoside 5'-triphosphate + H2O = a ribonucleoside 5'-phosphate + diphosphate + H(+). The catalysed reaction is a 2'-deoxyribonucleoside 5'-triphosphate + H2O = a 2'-deoxyribonucleoside 5'-phosphate + diphosphate + H(+). It catalyses the reaction dUTP + H2O = dUMP + diphosphate + H(+). It carries out the reaction dTTP + H2O = dTMP + diphosphate + H(+). The enzyme catalyses dCTP + H2O = dCMP + diphosphate + H(+). In terms of biological role, catalyzes the hydrolysis of nucleoside triphosphates, with a preference for pyrimidine deoxynucleoside triphosphates (dUTP, dTTP and dCTP). This is Nucleoside triphosphatase NudI from Escherichia coli O9:H4 (strain HS).